The primary structure comprises 379 residues: Queuine tRNA-ribosyltransferase (379 aa).

Asp94 serves as the catalytic Proton acceptor. Substrate contacts are provided by residues Asp94 to Phe98, Asp148, Gln191, and Gly218. An RNA binding region spans residues Gly249–Ala255. Residue Asp268 is the Nucleophile of the active site. Residues Thr273–Arg277 are RNA binding; important for wobble base 34 recognition. Residues Cys306, Cys308, Cys311, and His337 each contribute to the Zn(2+) site.

This sequence belongs to the queuine tRNA-ribosyltransferase family. In terms of assembly, homodimer. Within each dimer, one monomer is responsible for RNA recognition and catalysis, while the other monomer binds to the replacement base PreQ1. Zn(2+) is required as a cofactor.

It carries out the reaction 7-aminomethyl-7-carbaguanine + guanosine(34) in tRNA = 7-aminomethyl-7-carbaguanosine(34) in tRNA + guanine. It functions in the pathway tRNA modification; tRNA-queuosine biosynthesis. Its function is as follows. Catalyzes the base-exchange of a guanine (G) residue with the queuine precursor 7-aminomethyl-7-deazaguanine (PreQ1) at position 34 (anticodon wobble position) in tRNAs with GU(N) anticodons (tRNA-Asp, -Asn, -His and -Tyr). Catalysis occurs through a double-displacement mechanism. The nucleophile active site attacks the C1' of nucleotide 34 to detach the guanine base from the RNA, forming a covalent enzyme-RNA intermediate. The proton acceptor active site deprotonates the incoming PreQ1, allowing a nucleophilic attack on the C1' of the ribose to form the product. After dissociation, two additional enzymatic reactions on the tRNA convert PreQ1 to queuine (Q), resulting in the hypermodified nucleoside queuosine (7-(((4,5-cis-dihydroxy-2-cyclopenten-1-yl)amino)methyl)-7-deazaguanosine). This chain is Queuine tRNA-ribosyltransferase, found in Staphylococcus epidermidis (strain ATCC 35984 / DSM 28319 / BCRC 17069 / CCUG 31568 / BM 3577 / RP62A).